Reading from the N-terminus, the 340-residue chain is Pre-rRNA-processing protein esf-2 (340 aa).

Composition is skewed to basic and acidic residues over residues 1 to 12 (MPEDDVRNKFLD) and 19 to 32 (DAGHGSDSEDDFQK). The interval 1-103 (MPEDDVRNKF…KSVLASDLPG (103 aa)) is disordered. Residues 44–64 (DDEDSEADDFTDAEEEHDQDD) show a composition bias toward acidic residues. The segment covering 65 to 95 (AESKDAPAKDGQETTDGKEKKDGKKEKEKKS) has biased composition (basic and acidic residues). The 91-residue stretch at 124 to 214 (GVVYISRVPP…KKGSYYRDDI (91 aa)) folds into the RRM domain. Positions 272 to 329 (AKKASKGSKAGGEGAAQVTESTIPSAAATTTTTTNDDKRRTFKQIPLAKKRKLDETQP) are disordered.

The protein belongs to the ESF2/ABP1 family.

It localises to the nucleus. Its subcellular location is the nucleolus. In terms of biological role, involved in the small subunit (SSU) processome assembly and function, and in the 18S rRNA synthesis. Required for the early cleavages at sites A0, A1 and A2. The chain is Pre-rRNA-processing protein esf-2 (esf-2) from Neurospora crassa (strain ATCC 24698 / 74-OR23-1A / CBS 708.71 / DSM 1257 / FGSC 987).